Here is a 416-residue protein sequence, read N- to C-terminus: MFADLDYDIEEDKLGIPTVPGKVTLQKDAQNLIGISIGGGAQYCPCLYIVQVFDNTPAALDGTVAAGDEITGVNGRSIKGKTKVEVAKMIQEVKGEVTIHYNKLQADPKQGMSLDIVLKKVKHRLVENMSSGTADALGLSRAILCNDGLVKRLEELERTAELYKGMTEHTKNLLRAFYELSQTHRAFGDVFSVIGVREPQPAASEAFVKFADAHRSIEKFGIRLLKTIKPMLTDLNTYLNKAIPDTRLTIKKYLDVKFEYLSYCLKVKEMDDEEYSCIALGEPLYRVSTGNYEYRLILRCRQEARARFSQMRKDVLEKMELLDQKHVQDIVFQLQRFVSTMSKYYNDCYAVLRDADVFPIEVDLAHTTLAYGPNQGGFTDGEDEEEEEEDGAAREVSKDARGATGPTDKGGSWCDS.

The 84-residue stretch at 22 to 105 (KVTLQKDAQN…EVTIHYNKLQ (84 aa)) folds into the PDZ domain. The Zn(2+) site is built by cysteine 44 and cysteine 46. Phosphothreonine is present on threonine 82. The AH domain occupies 144-357 (LCNDGLVKRL…CYAVLRDADV (214 aa)). Residues 373–416 (PNQGGFTDGEDEEEEEEDGAAREVSKDARGATGPTDKGGSWCDS) are disordered. Positions 380 to 390 (DGEDEEEEEED) are enriched in acidic residues. Residues 391–401 (GAAREVSKDAR) show a composition bias toward basic and acidic residues. Cysteine 414 is lipidated: S-palmitoyl cysteine; by DHHC8.

As to quaternary structure, monomer and homodimer. Interacts with CXADR. Interacts presynaptically with the glutamate receptors GRIA2, GRIA3, GRIK3, isoform 3 of GRIA4, isoform A of GRM4, GRM7 and GRM8; with NAPA and NAPB; and with BTG2. The interaction with NAPA and NAPB disrupts the interaction with GRIA2, conducting to the internalization of GRIA2. Interacts with PRKCA; with the amine transporters SLC6A2 and SLC6A3; with the channels ASIC1 and ASIC2; with the GTP-binding proteins ARF1 and ARF3; with the ephrin receptor tyrosine kinases EPHA7, EPHB1 and EPHB2; with ERBB2 and through its PDZ domain with the C-terminal tail of PRLHR. Interacts with UNC5A. Interacts (via AH domain) with NCS1/FREQ; in a calcium-dependent manner. Interacts with F-actin and associates with the ARP2/3 complex. Interacts (via PDZ domain) with ARF1 (activated); the interaction blocks Arp2/3 complex inhibition. Interacts with SORCS3. Phosphorylation at Thr-82 appears to inhibit the interaction with AMPA receptors. In terms of processing, palmitoylation on Cys-414 is essential for long-term synaptic depression (LTD). Ubiquitous.

It localises to the cytoplasm. The protein resides in the perinuclear region. It is found in the membrane. Its subcellular location is the postsynaptic density. The protein localises to the synapse. It localises to the synaptosome. The protein resides in the cytoskeleton. Its function is as follows. Probable adapter protein that bind to and organize the subcellular localization of a variety of membrane proteins containing some PDZ recognition sequence. Involved in the clustering of various receptors, possibly by acting at the receptor internalization level. Plays a role in synaptic plasticity by regulating the trafficking and internalization of AMPA receptors. May be regulated upon PRKCA activation. May regulate ASIC1/ASIC3 channel. Regulates actin polymerization by inhibiting the actin-nucleating activity of the Arp2/3 complex; the function is competitive with nucleation promoting factors and is linked to neuronal morphology regulation and AMPA receptor (AMPAR) endocytosis. Via interaction with the Arp2/3 complex involved in regulation of synaptic plasicity of excitatory synapses and required for spine shrinkage during long-term depression (LTD). Involved in regulation of astrocyte morphology, antagonistic to Arp2/3 complex activator WASL/N-WASP function. This is PRKCA-binding protein (Pick1) from Rattus norvegicus (Rat).